The following is a 689-amino-acid chain: MTTENFFAEIGTEELPPKALKKLATAFAENVENELKQAGLAFDKVEWFAAPRRLAVKVLNLAANQPSKEIEKRGPAVSAAFDAEGKPTKAAEGWARGCGITVDQAERLVTDKGEWLVHRAVIEGQPTKNLMLDIIAKSLANLPIPKTMRWGDKNVQFVRPVHTVTLLLGGELIEGEILGIASGRTIRGHRFLGEREFQISHADQYPSLLEEKGCVIADFNKRREMILTKSQEKATALGGVADIEDDLLDEVTSLVEFPNVLTAKFEERFLAVPAEALVYTMKGDQKYFPIYDKEGKLLPHFIFVSNINPVDPMPIIEGNEKVVRPRLSDAEFFFNTDKKQRLEDLLPRLQTVLFQQQLGTLLDKTKRIQSLAGEIAGQIGADKAKAERAGLLSKCDLMTNMVFEFTDTQGVMGMHYARHDGEDEEVAVALNEQYMPRFAGDNLPNSLVASSVALADKFDTLTGIFGIGQAPKGSADPFALRRAALGALRIIVEKNLSLDLADLVKKSAALFGDKLTNANVVDDVVDFMLGRFRAWYQDGGIAVDVIQAVLARRPTKPADFDARVRAVSHFRTLDSAEALAAANKRVSNILAKVAGEIRSEIDRTLLLEAEEKALAEQVLALQSELAPVFAKGDYQTALDRLACLREVVDNFFDKVMVNAEDEKLRQNRQAMLNVLRNLFLQVADISLLQ.

The protein belongs to the class-II aminoacyl-tRNA synthetase family. In terms of assembly, tetramer of two alpha and two beta subunits.

It localises to the cytoplasm. The catalysed reaction is tRNA(Gly) + glycine + ATP = glycyl-tRNA(Gly) + AMP + diphosphate. The sequence is that of Glycine--tRNA ligase beta subunit from Actinobacillus succinogenes (strain ATCC 55618 / DSM 22257 / CCUG 43843 / 130Z).